The chain runs to 125 residues: Protein ApaG (125 aa).

The region spanning 1–125 is the ApaG domain; the sequence is MINSPRVCIQ…FRLAVPTLIH (125 aa).

This is Protein ApaG from Salmonella arizonae (strain ATCC BAA-731 / CDC346-86 / RSK2980).